Consider the following 485-residue polypeptide: Glutamate--tRNA ligase (485 aa).

Residues 12-22 (PSPTGYMHVGN) carry the 'HIGH' region motif. 4 residues coordinate Zn(2+): C109, C111, C136, and H138. The 'KMSKS' region signature appears at 253–257 (KLSKR). Residue K256 participates in ATP binding.

It belongs to the class-I aminoacyl-tRNA synthetase family. Glutamate--tRNA ligase type 1 subfamily. Monomer. It depends on Zn(2+) as a cofactor.

The protein localises to the cytoplasm. The enzyme catalyses tRNA(Glu) + L-glutamate + ATP = L-glutamyl-tRNA(Glu) + AMP + diphosphate. Its function is as follows. Catalyzes the attachment of glutamate to tRNA(Glu) in a two-step reaction: glutamate is first activated by ATP to form Glu-AMP and then transferred to the acceptor end of tRNA(Glu). The protein is Glutamate--tRNA ligase of Clostridium botulinum (strain Eklund 17B / Type B).